The following is a 373-amino-acid chain: Flap endonuclease 1 (373 aa).

The segment at M1–R105 is N-domain. Position 34 (D34) interacts with Mg(2+). Positions 47 and 71 each coordinate DNA. The Mg(2+) site is built by D87, E159, E161, D180, and D182. The interval D123–H254 is I-domain. A DNA-binding site is contributed by E159. 2 residues coordinate DNA: G232 and D234. D234 contributes to the Mg(2+) binding site. Residues T340–F348 form an interaction with PCNA region. Residues F347–K373 form a disordered region.

It belongs to the XPG/RAD2 endonuclease family. FEN1 subfamily. Interacts with PCNA. Three molecules of FEN1 bind to one PCNA trimer with each molecule binding to one PCNA monomer. PCNA stimulates the nuclease activity without altering cleavage specificity. Requires Mg(2+) as cofactor. Phosphorylated. Phosphorylation upon DNA damage induces relocalization to the nuclear plasma.

The protein resides in the nucleus. Its subcellular location is the nucleolus. It is found in the nucleoplasm. It localises to the mitochondrion. Structure-specific nuclease with 5'-flap endonuclease and 5'-3' exonuclease activities involved in DNA replication and repair. During DNA replication, cleaves the 5'-overhanging flap structure that is generated by displacement synthesis when DNA polymerase encounters the 5'-end of a downstream Okazaki fragment. It enters the flap from the 5'-end and then tracks to cleave the flap base, leaving a nick for ligation. Also involved in the long patch base excision repair (LP-BER) pathway, by cleaving within the apurinic/apyrimidinic (AP) site-terminated flap. Acts as a genome stabilization factor that prevents flaps from equilibrating into structures that lead to duplications and deletions. Also possesses 5'-3' exonuclease activity on nicked or gapped double-stranded DNA, and exhibits RNase H activity. Also involved in replication and repair of rDNA and in repairing mitochondrial DNA. The protein is Flap endonuclease 1 of Komagataella phaffii (strain GS115 / ATCC 20864) (Yeast).